The chain runs to 756 residues: Anaphase-promoting complex subunit 5 (756 aa).

TPR repeat units follow at residues 301 to 334, 522 to 555, 581 to 614, and 678 to 711; these read RYAA…AQES, DGRY…KAQN, ISVL…SREY, and YSQQ…EQLR.

It belongs to the APC5 family. The APC/C is composed of at least 12 subunits.

It is found in the nucleus. Its subcellular location is the cytoplasm. It localises to the cytoskeleton. The protein resides in the spindle. Its pathway is protein modification; protein ubiquitination. In terms of biological role, component of the anaphase promoting complex/cyclosome (APC/C), a cell cycle-regulated E3 ubiquitin ligase that controls progression through mitosis and the G1 phase of the cell cycle. The APC/C complex acts by mediating ubiquitination and subsequent degradation of target proteins: it mainly mediates the formation of 'Lys-11'-linked polyubiquitin chains and, to a lower extent, the formation of 'Lys-48'- and 'Lys-63'-linked polyubiquitin chains. The APC/C complex catalyzes assembly of branched 'Lys-11'-/'Lys-48'-linked branched ubiquitin chains on target proteins. The chain is Anaphase-promoting complex subunit 5 (ANAPC5) from Gallus gallus (Chicken).